Consider the following 117-residue polypeptide: Large ribosomal subunit protein uL18 (117 aa).

This sequence belongs to the universal ribosomal protein uL18 family. As to quaternary structure, part of the 50S ribosomal subunit; part of the 5S rRNA/L5/L18/L25 subcomplex. Contacts the 5S and 23S rRNAs.

Its function is as follows. This is one of the proteins that bind and probably mediate the attachment of the 5S RNA into the large ribosomal subunit, where it forms part of the central protuberance. In Pectobacterium atrosepticum (strain SCRI 1043 / ATCC BAA-672) (Erwinia carotovora subsp. atroseptica), this protein is Large ribosomal subunit protein uL18.